The chain runs to 753 residues: 5-methyltetrahydropteroyltriglutamate--homocysteine methyltransferase (753 aa).

5-methyltetrahydropteroyltri-L-glutamate-binding positions include 17-20 and K117; that span reads RELK. L-homocysteine-binding positions include 431 to 433 and E484; that span reads IGS. Residues 431–433 and E484 contribute to the L-methionine site; that span reads IGS. 5-methyltetrahydropteroyltri-L-glutamate-binding positions include 515 to 516 and W561; that span reads RC. D599 is an L-homocysteine binding site. D599 is a binding site for L-methionine. E605 contacts 5-methyltetrahydropteroyltri-L-glutamate. Residues H641, C643, and E665 each contribute to the Zn(2+) site. H694 serves as the catalytic Proton donor. C726 provides a ligand contact to Zn(2+).

The protein belongs to the vitamin-B12 independent methionine synthase family. Zn(2+) serves as cofactor.

The enzyme catalyses 5-methyltetrahydropteroyltri-L-glutamate + L-homocysteine = tetrahydropteroyltri-L-glutamate + L-methionine. It functions in the pathway amino-acid biosynthesis; L-methionine biosynthesis via de novo pathway; L-methionine from L-homocysteine (MetE route): step 1/1. Its function is as follows. Catalyzes the transfer of a methyl group from 5-methyltetrahydrofolate to homocysteine resulting in methionine formation. This Cronobacter sakazakii (strain ATCC BAA-894) (Enterobacter sakazakii) protein is 5-methyltetrahydropteroyltriglutamate--homocysteine methyltransferase.